We begin with the raw amino-acid sequence, 309 residues long: Ribosomal RNA small subunit methyltransferase H (309 aa).

S-adenosyl-L-methionine contacts are provided by residues 44 to 46, Asp-62, Phe-102, Asp-118, and Gln-125; that span reads GGH. Positions 289–309 are disordered; it reads LEQQRNSRARSAKLRVAARSS.

It belongs to the methyltransferase superfamily. RsmH family.

The protein resides in the cytoplasm. It carries out the reaction cytidine(1402) in 16S rRNA + S-adenosyl-L-methionine = N(4)-methylcytidine(1402) in 16S rRNA + S-adenosyl-L-homocysteine + H(+). In terms of biological role, specifically methylates the N4 position of cytidine in position 1402 (C1402) of 16S rRNA. This Synechococcus sp. (strain JA-3-3Ab) (Cyanobacteria bacterium Yellowstone A-Prime) protein is Ribosomal RNA small subunit methyltransferase H.